Here is a 438-residue protein sequence, read N- to C-terminus: Histidine--tRNA ligase (438 aa).

This sequence belongs to the class-II aminoacyl-tRNA synthetase family. As to quaternary structure, homodimer.

The protein resides in the cytoplasm. It catalyses the reaction tRNA(His) + L-histidine + ATP = L-histidyl-tRNA(His) + AMP + diphosphate + H(+). This is Histidine--tRNA ligase (hisS) from Thermobifida fusca (strain YX).